Consider the following 109-residue polypeptide: U3-lycotoxin-Ls1x (109 aa).

The N-terminal stretch at M1 to A20 is a signal peptide. The propeptide occupies E21 to R44. Cystine bridges form between C48–C63, C55–C72, C62–C88, and C74–C86.

Belongs to the neurotoxin 19 (CSTX) family. 01 subfamily. As to expression, expressed by the venom gland.

It localises to the secreted. This Lycosa singoriensis (Wolf spider) protein is U3-lycotoxin-Ls1x.